The following is a 453-amino-acid chain: Ribulose bisphosphate carboxylase large chain (453 aa).

A propeptide spanning residues 1–2 (MS) is cleaved from the precursor. N-acetylproline is present on Pro-3. N6,N6,N6-trimethyllysine is present on Lys-14. Substrate is bound by residues Asn-123 and Thr-173. Lys-175 serves as the catalytic Proton acceptor. Lys-177 lines the substrate pocket. 3 residues coordinate Mg(2+): Lys-201, Asp-203, and Glu-204. N6-carboxylysine is present on Lys-201. The active-site Proton acceptor is His-294. Residues Arg-295, His-327, and Ser-379 each contribute to the substrate site.

This sequence belongs to the RuBisCO large chain family. Type I subfamily. In terms of assembly, heterohexadecamer of 8 large chains and 8 small chains; disulfide-linked. The disulfide link is formed within the large subunit homodimers. The cofactor is Mg(2+). Post-translationally, the disulfide bond which can form in the large chain dimeric partners within the hexadecamer appears to be associated with oxidative stress and protein turnover.

It is found in the plastid. Its subcellular location is the chloroplast. It catalyses the reaction 2 (2R)-3-phosphoglycerate + 2 H(+) = D-ribulose 1,5-bisphosphate + CO2 + H2O. It carries out the reaction D-ribulose 1,5-bisphosphate + O2 = 2-phosphoglycolate + (2R)-3-phosphoglycerate + 2 H(+). RuBisCO catalyzes two reactions: the carboxylation of D-ribulose 1,5-bisphosphate, the primary event in carbon dioxide fixation, as well as the oxidative fragmentation of the pentose substrate in the photorespiration process. Both reactions occur simultaneously and in competition at the same active site. The sequence is that of Ribulose bisphosphate carboxylase large chain from Hydnophytum formicarum (Ant plant).